The chain runs to 150 residues: Large ribosomal subunit protein uL11 (150 aa).

It belongs to the universal ribosomal protein uL11 family. Part of the ribosomal stalk of the 50S ribosomal subunit. Interacts with L10 and the large rRNA to form the base of the stalk. L10 forms an elongated spine to which L12 dimers bind in a sequential fashion forming a multimeric L10(L12)X complex. In terms of processing, one or more lysine residues are methylated.

In terms of biological role, forms part of the ribosomal stalk which helps the ribosome interact with GTP-bound translation factors. This Jannaschia sp. (strain CCS1) protein is Large ribosomal subunit protein uL11.